The following is a 79-amino-acid chain: MSEISVTQTLNTLGLRCPEPVMLVRKNIRHLNDGEILLIIADDPATTRDIPSFCQFMDHTLLQSEVEKPPFKYWVKRGK.

Catalysis depends on Cys-17, which acts as the Cysteine persulfide intermediate.

The protein belongs to the sulfur carrier protein TusA family.

Its subcellular location is the cytoplasm. Its function is as follows. Sulfur carrier protein which probably makes part of a sulfur-relay system. This is Sulfur carrier protein TusA from Haemophilus influenzae (strain 86-028NP).